A 152-amino-acid chain; its full sequence is Deoxyuridine 5'-triphosphate nucleotidohydrolase (152 aa).

Substrate-binding positions include 71 to 73 (RSG), Asn-84, 88 to 90 (LID), and Met-98.

This sequence belongs to the dUTPase family. Mg(2+) is required as a cofactor.

The enzyme catalyses dUTP + H2O = dUMP + diphosphate + H(+). It participates in pyrimidine metabolism; dUMP biosynthesis; dUMP from dCTP (dUTP route): step 2/2. This enzyme is involved in nucleotide metabolism: it produces dUMP, the immediate precursor of thymidine nucleotides and it decreases the intracellular concentration of dUTP so that uracil cannot be incorporated into DNA. This chain is Deoxyuridine 5'-triphosphate nucleotidohydrolase, found in Shewanella denitrificans (strain OS217 / ATCC BAA-1090 / DSM 15013).